The following is a 79-amino-acid chain: uncharacterized protein (79 aa).

Positions 4–43 form a coiled coil; sequence QENEDLRKQLVEASELLKSQAKELKDAHQQQKLALQDFLE.

This is an uncharacterized protein from Homo sapiens (Human).